Reading from the N-terminus, the 603-residue chain is UvrABC system protein C (603 aa).

Positions 17 to 94 (TTSGCYKMLN…IKTHKPDYNV (78 aa)) constitute a GIY-YIG domain.

This sequence belongs to the UvrC family. As to quaternary structure, interacts with UvrB in an incision complex.

The protein localises to the cytoplasm. The UvrABC repair system catalyzes the recognition and processing of DNA lesions. UvrC both incises the 5' and 3' sides of the lesion. The N-terminal half is responsible for the 3' incision and the C-terminal half is responsible for the 5' incision. The polypeptide is UvrABC system protein C (Borreliella burgdorferi (strain ATCC 35210 / DSM 4680 / CIP 102532 / B31) (Borrelia burgdorferi)).